Here is a 2475-residue protein sequence, read N- to C-terminus: Non-reducing polyketide synthase prhL (2475 aa).

The N-terminal acylcarrier protein transacylase domain (SAT) stretch occupies residues Val-14–Gln-253. In terms of domain architecture, Ketosynthase family 3 (KS3) spans Ser-384–Glu-800. Active-site for beta-ketoacyl synthase activity residues include Cys-549, His-684, and His-723. The interval Leu-910–Ala-1212 is malonyl-CoA:ACP transacylase (MAT) domain. The active-site For acyl/malonyl transferase activity is the Ser-997. The segment at Glu-1279–Asn-1407 is N-terminal hotdog fold. The 308-residue stretch at Glu-1279 to Arg-1586 folds into the PKS/mFAS DH domain. The segment at Lys-1282–Leu-1585 is product template (PT) domain. The active-site Proton acceptor; for dehydratase activity is His-1312. The C-terminal hotdog fold stretch occupies residues Ser-1435 to Arg-1586. Asp-1493 functions as the Proton donor; for dehydratase activity in the catalytic mechanism. A Carrier domain is found at Ser-1626–Arg-1703. Ser-1663 bears the O-(pantetheine 4'-phosphoryl)serine mark. The methyltransferase (CMeT) domain stretch occupies residues His-1865–Asn-2098. A thioesterase (TE) domain region spans residues Ser-2127 to Leu-2475. Active-site for thioesterase activity residues include Ser-2250 and Asp-2412.

It carries out the reaction 3 malonyl-CoA + acetyl-CoA + 2 S-adenosyl-L-methionine = 3,5-dimethylorsellinate + 2 S-adenosyl-L-homocysteine + 3 CO2 + 4 CoA. It participates in secondary metabolite biosynthesis; terpenoid biosynthesis. Non-reducing polyketide synthase; part of the gene cluster that mediates the biosynthesis of paraherquonin, a meroterpenoid with a unique, highly congested hexacyclic molecular architecture. The first step of the pathway is the synthesis of 3,5-dimethylorsellinic acid (DMOA) by the polyketide synthase prhL. Synthesis of DMOA is followed by farnesylation by the prenyltransferase prhE, methylesterification by the methyl-transferase prhM, epoxidation of the prenyl chain by the flavin-dependent monooxygenase prhF, and cyclization of the farnesyl moiety by the terpene cyclase prhH, to yield the tetracyclic intermediate, protoaustinoid A. The short chain dehydrogenase prhI then oxidizes the C-3 alcohol group of the terpene cyclase product to transform protoaustinoid A into protoaustinoid B. The FAD-binding monooxygenase prhJ catalyzes the oxidation of protoaustinoid B into preaustinoid A which is further oxidized into preaustinoid A1 by FAD-binding monooxygenase phrK. Finally, prhA leads to berkeleydione via the berkeleyone B intermediate. PrhA is a multifunctional dioxygenase that first desaturates at C5-C6 to form berkeleyone B, followed by rearrangement of the A/B-ring to form the cycloheptadiene moiety in berkeleydione. Berkeleydione serves as the key intermediate for the biosynthesis of paraherquonin as well as many other meroterpenoids. The cytochrome P450 monooxygenases prhB, prhD, and prhN, as well as the isomerase prhC, are probably involved in the late stage of paraherquonin biosynthesis, after the production of berkeleydione. Especially prhC might be a multifunctional enzyme that catalyzes the D-ring expansion via intramolecular methoxy rearrangement, as well as the hydrolysis of the expanded D-ring. This chain is Non-reducing polyketide synthase prhL, found in Penicillium brasilianum.